The sequence spans 750 residues: Polyribonucleotide nucleotidyltransferase (750 aa).

Mg(2+) is bound by residues Asp-489 and Asp-495. The KH domain occupies 556-620; it reads PKMITRRIPN…EGIDKVIAKI (65 aa). The S1 motif domain occupies 630–701; that stretch reads GSVYEVKVIK…KTRKDKVSRK (72 aa). The segment at 697-750 is disordered; it reads KVSRKALMEKPEGYKERAPRDRDDKRGSRDNNRGRDNRGRDNRRDDRKPRENKD. Over residues 702-750 the composition is skewed to basic and acidic residues; that stretch reads ALMEKPEGYKERAPRDRDDKRGSRDNNRGRDNRGRDNRRDDRKPRENKD.

This sequence belongs to the polyribonucleotide nucleotidyltransferase family. Requires Mg(2+) as cofactor.

It localises to the cytoplasm. The catalysed reaction is RNA(n+1) + phosphate = RNA(n) + a ribonucleoside 5'-diphosphate. Its function is as follows. Involved in mRNA degradation. Catalyzes the phosphorolysis of single-stranded polyribonucleotides processively in the 3'- to 5'-direction. This chain is Polyribonucleotide nucleotidyltransferase, found in Christiangramia forsetii (strain DSM 17595 / CGMCC 1.15422 / KT0803) (Gramella forsetii).